The primary structure comprises 558 residues: Atlastin-1 (558 aa).

The interval 1 to 28 is disordered; that stretch reads MAKSRRDRNSWGGFSEKSSDWSSEEEEP. An N-terminal hypervariable region (HVR) region spans residues 1–34; it reads MAKSRRDRNSWGGFSEKSSDWSSEEEEPVRKAGP. Residues 1–449 lie on the Cytoplasmic side of the membrane; the sequence is MAKSRRDRNS…NIFHAARTPA (449 aa). Ser-10, Ser-22, and Ser-23 each carry phosphoserine. The GB1/RHD3-type G domain occupies 64–309; sequence DKEVVAVSVA…LIPWLLSPER (246 aa). GDP is bound by residues Arg-77, Lys-78, Gly-79, Lys-80, Ser-81, Phe-82, Gln-148, Arg-217, Asp-218, Val-276, and Asn-279. GTP is bound by residues Arg-77, Lys-78, Gly-79, Lys-80, Ser-81, and Phe-82. Ser-81 contacts Mg(2+). Positions 217, 218, and 276 each coordinate GTP. The 3HB (three-helix bundle) domain stretch occupies residues 347–438; that stretch reads MLQATAEANN…YIQYIKHNDS (92 aa). Lys-395 is modified (N6-acetyllysine). Residues 412-439 adopt a coiled-coil conformation; the sequence is EFSRRYLQQLESEIDELYIQYIKHNDSK. The interval 439 to 447 is linker; the sequence is KNIFHAART. The chain crosses the membrane as a helical span at residues 450–470; the sequence is TLFVVIFITYVIAGVTGFIGL. A topological domain (lumenal) is located at residue Asp-471. The helical transmembrane segment at 472-492 threads the bilayer; the sequence is IIASLCNMIMGLTLITLCTWA. Residues 493 to 558 are Cytoplasmic-facing; the sequence is YIRYSGEYRE…PTQQPEKKKI (66 aa). An autoinhibitory domain region spans residues 521–558; sequence NEALYKLYSAAATHRHLCHQAFPAPKSEPTQQPEKKKI.

This sequence belongs to the TRAFAC class dynamin-like GTPase superfamily. GB1/RHD3 GTPase family. GB1 subfamily. In terms of assembly, monomeric and homodimeric. The homodimer, transiently formed by two molecules on opposing membranes, is the active form mediating ER membrane fusion. Interacts with REEP1, REEP5, RTN3 and RTN4 (via the transmembrane region); these proteins are involved in endoplasmic reticulum tubular network organization. Interacts with ZFYVE27; both proteins are involved in endoplasmic reticulum tubular network organization. Interacts with ARL6IP1; both proteins are involved in endoplasmic reticulum tubular network organization. Interacts with SPAST; the interaction is direct, could recruit SPAST to Golgi membranes. Interacts (via N-terminal region) with MAP4K4 (via CNH regulatory domain). May interact with TMED2. Interacts with CPT1C. In terms of processing, phosphorylated. Phosphorylation, by different kinases, of the N-terminal hypervariable region (HVR) regulates the ATL1-mediated membrane tethering step.

It is found in the endoplasmic reticulum membrane. The protein localises to the golgi apparatus membrane. Its subcellular location is the cell projection. It localises to the axon. It catalyses the reaction GTP + H2O = GDP + phosphate + H(+). Functionally, atlastin-1 (ATL1) is a membrane-anchored GTPase that mediates the GTP-dependent fusion of endoplasmic reticulum (ER) membranes, maintaining the continuous ER network. It facilitates the formation of three-way junctions where ER tubules intersect. Two atlastin-1 on neighboring ER tubules bind GTP and form loose homodimers through the GB1/RHD3-type G domains and 3HB regions. Upon GTP hydrolysis, the 3HB regions tighten, pulling the membranes together to drive their fusion. After fusion, the homodimer disassembles upon release of inorganic phosphate (Pi). Subsequently, GDP dissociates, resetting the monomers to a conformation ready for a new fusion cycle. May also regulate more or less directly Golgi biogenesis. Indirectly regulates axonal development. This is Atlastin-1 from Mus musculus (Mouse).